Here is a 401-residue protein sequence, read N- to C-terminus: Probable tRNA sulfurtransferase (401 aa).

The region spanning glutamate 60–aspartate 165 is the THUMP domain. ATP-binding positions include methionine 183–leucine 184, histidine 208–phenylalanine 209, arginine 265, glycine 287, and glutamine 296.

The protein belongs to the ThiI family.

It localises to the cytoplasm. It carries out the reaction [ThiI sulfur-carrier protein]-S-sulfanyl-L-cysteine + a uridine in tRNA + 2 reduced [2Fe-2S]-[ferredoxin] + ATP + H(+) = [ThiI sulfur-carrier protein]-L-cysteine + a 4-thiouridine in tRNA + 2 oxidized [2Fe-2S]-[ferredoxin] + AMP + diphosphate. It catalyses the reaction [ThiS sulfur-carrier protein]-C-terminal Gly-Gly-AMP + S-sulfanyl-L-cysteinyl-[cysteine desulfurase] + AH2 = [ThiS sulfur-carrier protein]-C-terminal-Gly-aminoethanethioate + L-cysteinyl-[cysteine desulfurase] + A + AMP + 2 H(+). Its pathway is cofactor biosynthesis; thiamine diphosphate biosynthesis. Functionally, catalyzes the ATP-dependent transfer of a sulfur to tRNA to produce 4-thiouridine in position 8 of tRNAs, which functions as a near-UV photosensor. Also catalyzes the transfer of sulfur to the sulfur carrier protein ThiS, forming ThiS-thiocarboxylate. This is a step in the synthesis of thiazole, in the thiamine biosynthesis pathway. The sulfur is donated as persulfide by IscS. The sequence is that of Probable tRNA sulfurtransferase from Bacillus subtilis (strain 168).